We begin with the raw amino-acid sequence, 485 residues long: Probable cytosol aminopeptidase (485 aa).

Mn(2+) contacts are provided by Lys251 and Asp256. Lys263 is a catalytic residue. Asp274, Asp333, and Glu335 together coordinate Mn(2+). Arg337 is an active-site residue.

Belongs to the peptidase M17 family. The cofactor is Mn(2+).

The protein localises to the cytoplasm. It catalyses the reaction Release of an N-terminal amino acid, Xaa-|-Yaa-, in which Xaa is preferably Leu, but may be other amino acids including Pro although not Arg or Lys, and Yaa may be Pro. Amino acid amides and methyl esters are also readily hydrolyzed, but rates on arylamides are exceedingly low.. The enzyme catalyses Release of an N-terminal amino acid, preferentially leucine, but not glutamic or aspartic acids.. Presumably involved in the processing and regular turnover of intracellular proteins. Catalyzes the removal of unsubstituted N-terminal amino acids from various peptides. The chain is Probable cytosol aminopeptidase from Brucella melitensis biotype 1 (strain ATCC 23456 / CCUG 17765 / NCTC 10094 / 16M).